The primary structure comprises 85 residues: Cell division topological specificity factor (85 aa).

Belongs to the MinE family.

Its function is as follows. Prevents the cell division inhibition by proteins MinC and MinD at internal division sites while permitting inhibition at polar sites. This ensures cell division at the proper site by restricting the formation of a division septum at the midpoint of the long axis of the cell. This chain is Cell division topological specificity factor, found in Deinococcus geothermalis (strain DSM 11300 / CIP 105573 / AG-3a).